A 284-amino-acid polypeptide reads, in one-letter code: Interferon antagonist OPG040 (284 aa).

6 ANK repeats span residues 29-58, 60-89, 93-122, 127-157, 159-188, and 193-222; these read HGHS…LKNL, ENEF…DDSQ, KGNT…RLMF, GWKT…TFDL, ILLS…STNT, and LFIP…NIYS.

It belongs to the orthopoxvirus OPG039 family.

The protein resides in the host cytoplasm. Its subcellular location is the host nucleus. Functionally, inhibits antiviral activity induced by type I interferons. Does not block signal transduction of IFN, but is important to counter the host antiviral state induced by a pre-treatment with IFN. Plays a role in the inhibition of host NF-kappa-B activation by preventing the acetylation of the RELA/p65 subunit of NF-kappaB. This Bos taurus (Bovine) protein is Interferon antagonist OPG040 (OPG039).